The sequence spans 547 residues: Chaperonin GroEL 2 (547 aa).

ATP contacts are provided by residues T30–P33, K51, D87–T91, G415, and D496.

This sequence belongs to the chaperonin (HSP60) family. Forms a cylinder of 14 subunits composed of two heptameric rings stacked back-to-back. Interacts with the co-chaperonin GroES.

The protein resides in the cytoplasm. It catalyses the reaction ATP + H2O + a folded polypeptide = ADP + phosphate + an unfolded polypeptide.. Its function is as follows. Together with its co-chaperonin GroES, plays an essential role in assisting protein folding. The GroEL-GroES system forms a nano-cage that allows encapsulation of the non-native substrate proteins and provides a physical environment optimized to promote and accelerate protein folding. The chain is Chaperonin GroEL 2 from Rhodopseudomonas palustris (strain ATCC BAA-98 / CGA009).